Consider the following 257-residue polypeptide: MTNQRFKSTDPVNIEGWSWQPFLEDAIKRLEGLNVEPYPVPDRFLQREDQTGSKSKSIPVTTATWACKTEKFRQVRAACVSAGSAASVLNFVINPKSTYDLPFFGGDLVTLPAGHLLALDLQPAIKTDEVHTTHVWDRLIPIFERWRDQLPYGGPIPEEAQPFFSPGFLWTRLPLGEEGDELIQSIVRPAFNDYLDLYLELAASAERVTDERSEVLLQGQRKYTDYRAEKDPARGMLTRFHGSEWTEAYIHTVLFDL.

The protein belongs to the HY2 family.

The catalysed reaction is (3Z)-phycoerythrobilin + oxidized 2[4Fe-4S]-[ferredoxin] = 15,16-dihydrobiliverdin + reduced 2[4Fe-4S]-[ferredoxin] + 2 H(+). In terms of biological role, catalyzes the two-electron reduction of the C2 and C3(1) diene system of 15,16-dihydrobiliverdin. The sequence is that of Phycoerythrobilin:ferredoxin oxidoreductase (pebB) from Synechococcus sp. (strain WH8020).